The sequence spans 339 residues: NADH-quinone oxidoreductase subunit H (339 aa).

8 consecutive transmembrane segments (helical) span residues I9–C29, I82–I102, V115–G135, M161–V181, M187–L207, M235–T255, I275–I295, and G311–I331.

It belongs to the complex I subunit 1 family. NDH-1 is composed of 14 different subunits. Subunits NuoA, H, J, K, L, M, N constitute the membrane sector of the complex.

The protein resides in the cell inner membrane. The enzyme catalyses a quinone + NADH + 5 H(+)(in) = a quinol + NAD(+) + 4 H(+)(out). Its function is as follows. NDH-1 shuttles electrons from NADH, via FMN and iron-sulfur (Fe-S) centers, to quinones in the respiratory chain. The immediate electron acceptor for the enzyme in this species is believed to be ubiquinone. Couples the redox reaction to proton translocation (for every two electrons transferred, four hydrogen ions are translocated across the cytoplasmic membrane), and thus conserves the redox energy in a proton gradient. This subunit may bind ubiquinone. This Rickettsia bellii (strain OSU 85-389) protein is NADH-quinone oxidoreductase subunit H.